The primary structure comprises 302 residues: Ornithine carbamoyltransferase (302 aa).

Carbamoyl phosphate contacts are provided by residues 52–55 (STRT), glutamine 79, arginine 103, and 130–133 (HPCQ). L-ornithine-binding positions include asparagine 161, aspartate 221, and 225–226 (SM). Carbamoyl phosphate-binding positions include 261–262 (CL) and arginine 289.

Belongs to the aspartate/ornithine carbamoyltransferase superfamily. OTCase family.

It is found in the cytoplasm. The enzyme catalyses carbamoyl phosphate + L-ornithine = L-citrulline + phosphate + H(+). It participates in amino-acid biosynthesis; L-arginine biosynthesis; L-arginine from L-ornithine and carbamoyl phosphate: step 1/3. Its function is as follows. Reversibly catalyzes the transfer of the carbamoyl group from carbamoyl phosphate (CP) to the N(epsilon) atom of ornithine (ORN) to produce L-citrulline. This is Ornithine carbamoyltransferase from Methanosarcina mazei (strain ATCC BAA-159 / DSM 3647 / Goe1 / Go1 / JCM 11833 / OCM 88) (Methanosarcina frisia).